Here is a 505-residue protein sequence, read N- to C-terminus: L-carnitine/gamma-butyrobetaine antiporter (505 aa).

Transmembrane regions (helical) follow at residues 10–30 (IEPK…WLTV), 51–71 (WGWA…WLVF), 92–112 (IFMM…SIEI), 143–163 (GPLP…FFFV), 195–215 (FYLV…TPLV), 231–251 (LDAI…ACGL), 263–283 (SYLS…SFIM), 316–336 (WTVF…IFLA), 347–367 (LCFG…TVLG), 403–423 (LSTA…VTLI), 446–466 (LLVR…LLAL), and 475–495 (AIIA…LSFI).

The protein belongs to the BCCT transporter (TC 2.A.15) family. CaiT subfamily. In terms of assembly, homotrimer.

The protein resides in the cell inner membrane. The catalysed reaction is 4-(trimethylamino)butanoate(in) + (R)-carnitine(out) = 4-(trimethylamino)butanoate(out) + (R)-carnitine(in). Its pathway is amine and polyamine metabolism; carnitine metabolism. In terms of biological role, catalyzes the exchange of L-carnitine for gamma-butyrobetaine. This Salmonella typhi protein is L-carnitine/gamma-butyrobetaine antiporter.